The sequence spans 540 residues: Chaperonin GroEL (540 aa).

Residues 30 to 33, Lys51, 87 to 91, Gly415, 479 to 481, and Asp495 contribute to the ATP site; these read TLGP, DGTTT, and NAA.

This sequence belongs to the chaperonin (HSP60) family. As to quaternary structure, forms a cylinder of 14 subunits composed of two heptameric rings stacked back-to-back. Interacts with the co-chaperonin GroES.

It is found in the cytoplasm. The enzyme catalyses ATP + H2O + a folded polypeptide = ADP + phosphate + an unfolded polypeptide.. Its function is as follows. Together with its co-chaperonin GroES, plays an essential role in assisting protein folding. The GroEL-GroES system forms a nano-cage that allows encapsulation of the non-native substrate proteins and provides a physical environment optimized to promote and accelerate protein folding. In Raoultella ornithinolytica (Klebsiella ornithinolytica), this protein is Chaperonin GroEL.